The chain runs to 494 residues: Ketol-acid reductoisomerase (NADP(+)) (494 aa).

The KARI N-terminal Rossmann domain maps to 14 to 208 (LDQLGRCRFM…GGHRAGCLES (195 aa)). NADP(+) is bound by residues 45–48 (CGAQ), Arg-68, Arg-76, Ser-78, and 108–110 (DKQ). The active site involves His-132. An NADP(+)-binding site is contributed by Gly-158. 2 KARI C-terminal knotted domains span residues 209 to 344 (SFVA…NYPS) and 345 to 487 (TDVE…MTDM). 4 residues coordinate Mg(2+): Asp-217, Glu-221, Glu-389, and Glu-393. A substrate-binding site is contributed by Ser-414.

The protein belongs to the ketol-acid reductoisomerase family. Mg(2+) serves as cofactor.

The enzyme catalyses (2R)-2,3-dihydroxy-3-methylbutanoate + NADP(+) = (2S)-2-acetolactate + NADPH + H(+). The catalysed reaction is (2R,3R)-2,3-dihydroxy-3-methylpentanoate + NADP(+) = (S)-2-ethyl-2-hydroxy-3-oxobutanoate + NADPH + H(+). It participates in amino-acid biosynthesis; L-isoleucine biosynthesis; L-isoleucine from 2-oxobutanoate: step 2/4. It functions in the pathway amino-acid biosynthesis; L-valine biosynthesis; L-valine from pyruvate: step 2/4. Functionally, involved in the biosynthesis of branched-chain amino acids (BCAA). Catalyzes an alkyl-migration followed by a ketol-acid reduction of (S)-2-acetolactate (S2AL) to yield (R)-2,3-dihydroxy-isovalerate. In the isomerase reaction, S2AL is rearranged via a Mg-dependent methyl migration to produce 3-hydroxy-3-methyl-2-ketobutyrate (HMKB). In the reductase reaction, this 2-ketoacid undergoes a metal-dependent reduction by NADPH to yield (R)-2,3-dihydroxy-isovalerate. In Vibrio vulnificus (strain CMCP6), this protein is Ketol-acid reductoisomerase (NADP(+)).